Here is a 171-residue protein sequence, read N- to C-terminus: HTH-type transcriptional regulator AldR (171 aa).

A compositionally biased stretch (polar residues) spans 1–14; sequence MSEGSSITGVQTPG. The segment at 1–21 is disordered; the sequence is MSEGSSITGVQTPGSPKDVRA. One can recognise an HTH asnC-type domain in the interval 24-85; sequence LDDIDRRILL…DIDPAAVGLG (62 aa). Residues 43-62 constitute a DNA-binding region (H-T-H motif); sequence NSALAEMVGIAPSTCHGRVR.

Homodimer in the absence of L-alanine. Homooctamer in the presence of L-alanine. Homotetramers in the presence of L-cysteine.

With respect to regulation, in the presence of alanine, AldR changes its quaternary structure from a homodimer to an octamer with an open-ring conformation. The binding affinity of AldR for the ald control region is increased significantly by L-alanine. In vitro, L-cysteine also increases the binding affinity of AldR for the target DNA. Its function is as follows. Transcriptional regulator that might play a role under hypoxic conditions. Regulates the expression of ald, which encodes L-alanine dehydrogenase. Serves as both an activator for ald expression in the presence of L-alanine and a repressor in the absence of L-alanine. Acts by binding directly to the upstream region of the ald gene. Four AldR-binding sites (O2, O1, O4 and O3) were identified upstream of the ald gene. O2, O1 and O4 are required for the induction of ald expression by alanine, while O3 is directly involved in the repression of ald expression, by occluding the access of RNA polymerase to the ald promoter. In addition to O3, both O1 and O4 are also necessary for full repression of ald expression in the absence of alanine. This is HTH-type transcriptional regulator AldR from Mycolicibacterium smegmatis (strain ATCC 700084 / mc(2)155) (Mycobacterium smegmatis).